We begin with the raw amino-acid sequence, 114 residues long: Holo-[acyl-carrier-protein] synthase (114 aa).

Mg(2+)-binding residues include Asp8 and Glu58.

The protein belongs to the P-Pant transferase superfamily. AcpS family. The cofactor is Mg(2+).

Its subcellular location is the cytoplasm. The catalysed reaction is apo-[ACP] + CoA = holo-[ACP] + adenosine 3',5'-bisphosphate + H(+). Transfers the 4'-phosphopantetheine moiety from coenzyme A to a Ser of acyl-carrier-protein. This chain is Holo-[acyl-carrier-protein] synthase, found in Mycoplasma genitalium (strain ATCC 33530 / DSM 19775 / NCTC 10195 / G37) (Mycoplasmoides genitalium).